Here is a 134-residue protein sequence, read N- to C-terminus: Phosphoribosyl-AMP cyclohydrolase (134 aa).

Residue Asp80 participates in Mg(2+) binding. Cys81 is a Zn(2+) binding site. 2 residues coordinate Mg(2+): Asp82 and Asp84. Residues Cys98 and Cys105 each coordinate Zn(2+).

The protein belongs to the PRA-CH family. In terms of assembly, homodimer. Requires Mg(2+) as cofactor. It depends on Zn(2+) as a cofactor.

Its subcellular location is the cytoplasm. The catalysed reaction is 1-(5-phospho-beta-D-ribosyl)-5'-AMP + H2O = 1-(5-phospho-beta-D-ribosyl)-5-[(5-phospho-beta-D-ribosylamino)methylideneamino]imidazole-4-carboxamide. It functions in the pathway amino-acid biosynthesis; L-histidine biosynthesis; L-histidine from 5-phospho-alpha-D-ribose 1-diphosphate: step 3/9. In terms of biological role, catalyzes the hydrolysis of the adenine ring of phosphoribosyl-AMP. This chain is Phosphoribosyl-AMP cyclohydrolase, found in Bordetella pertussis (strain Tohama I / ATCC BAA-589 / NCTC 13251).